Reading from the N-terminus, the 231-residue chain is Verlamelin biosynthesis protein B (231 aa).

It functions in the pathway secondary metabolite biosynthesis. In terms of biological role, part of the gene cluster that mediates the biosynthesis of verlamelin, a lipopeptide that exhibits antifungal activity against plant pathogenic fungi. Verlamelin is a cyclic hexadepsipeptide and is bridged by ester bonding between a 5-hydroxytetradecanoic acid moiety and a carboxyl group on the terminal Val of amide-bonded tetradecanoyl-hexapeptide D-allo-Thr-D-Ala-L-Pro-L-Gln-D-Tyr-L-Val. VlmA and vlmB are altogether regarded as essential components in the biosynthesis of 5-hydroxytetradecanoic acid. VlmA catalyzes the hydroxylation at position C5 of tetradecanoic acid produced in primary metabolism, while the precise function of vlmB still remains to be solved. To be loaded onto the waiting NRPS, 5-hydroxytetradecanoic acid is activated in the form of acyladenylate by the AMP-dependent ligase vlmC. VlmS seems to accept the fatty-acyl intermediate onto the initial module to further elongate amino acid residues by the downstream modules. In addition, in the last module at its C-terminus, vlmS contains a surplus condensation (C) domain that may be involved in cyclization, the last step to form verlamelin. This Lecanicillium sp protein is Verlamelin biosynthesis protein B.